We begin with the raw amino-acid sequence, 202 residues long: Nascent polypeptide-associated complex subunit alpha (202 aa).

Residues 1–19 (MADPRVEELPDEEVPKTNV) are compositionally biased toward basic and acidic residues. The tract at residues 1–44 (MADPRVEELPDEEVPKTNVEDAGSDSESEAGEEPTIPGGAAVAV) is disordered. A compositionally biased stretch (acidic residues) spans 22-32 (AGSDSESEAGE). Positions 46 to 111 (SRNEKKARKA…AKIEDLNAQA (66 aa)) constitute an NAC-A/B domain. The disordered stretch occupies residues 118-165 (QLAAQEAAQEHAGHEHEDILGKAKEPEAEKKEAEEDDGEEVDESGLEA). The segment covering 125–150 (AQEHAGHEHEDILGKAKEPEAEKKEA) has biased composition (basic and acidic residues). A compositionally biased stretch (acidic residues) spans 151 to 162 (EEDDGEEVDESG). The UBA domain maps to 163–202 (LEAKDIELVMAQANVSRKKAVKALRENDNDIVNSIMALSI).

The protein belongs to the NAC-alpha family. In terms of assembly, part of the nascent polypeptide-associated complex (NAC), consisting of egd2 and egd1. NAC associates with ribosomes via egd1.

Its subcellular location is the cytoplasm. The protein resides in the nucleus. Component of the nascent polypeptide-associated complex (NAC), a dynamic component of the ribosomal exit tunnel, protecting the emerging polypeptides from interaction with other cytoplasmic proteins to ensure appropriate nascent protein targeting. The NAC complex also promotes mitochondrial protein import by enhancing productive ribosome interactions with the outer mitochondrial membrane and blocks the inappropriate interaction of ribosomes translating non-secretory nascent polypeptides with translocation sites in the membrane of the endoplasmic reticulum. Egd2 may also be involved in transcription regulation. The sequence is that of Nascent polypeptide-associated complex subunit alpha (egd2) from Aspergillus terreus (strain NIH 2624 / FGSC A1156).